Reading from the N-terminus, the 93-residue chain is Serine rich endogenous peptide 6 (93 aa).

Residues Met-1–Ser-27 form the signal peptide. 2 consecutive short sequence motifs (SCOOP motif) follow at residues Gly-48–Ile-62 and Ile-73–Arg-87. Residues Gly-52 to Gly-93 form a disordered region. A compositionally biased stretch (polar residues) spans Ser-53 to Tyr-66. Short sequence motifs (sxS motif essential for MIK2 binding) lie at residues Ser-54–Ser-56 and Ser-79–Ser-81.

This sequence belongs to the serine rich endogenous peptide (SCOOP) phytocytokine family. As to quaternary structure, interacts with MIK2 (via extracellular leucine-rich repeat domain); this interaction triggers the formation of complex between MIK2 and the BAK1/SERK3 and SERK4 coreceptors, and subsequent BAK1 activation by phosphorylation. Mostly expressed in seedlings shoots, and, to a lower extent, in roots.

It is found in the cell membrane. The protein localises to the secreted. It localises to the extracellular space. Its subcellular location is the apoplast. Functionally, brassicaceae-specific phytocytokine (plant endogenous peptide released into the apoplast) perceived by MIK2 in a BAK1/SERK3 and SERK4 coreceptors-dependent manner, that modulates various physiological and antimicrobial processes including growth prevention and reactive oxygen species (ROS) response regulation. Inhibits root growth. In Arabidopsis thaliana (Mouse-ear cress), this protein is Serine rich endogenous peptide 6.